Consider the following 169-residue polypeptide: ATP synthase subunit b (169 aa).

A helical transmembrane segment spans residues Pro12 to Tyr32. The disordered stretch occupies residues Ala69–Glu107. Basic and acidic residues predominate over residues Arg87 to Glu107.

Belongs to the ATPase B chain family. F-type ATPases have 2 components, F(1) - the catalytic core - and F(0) - the membrane proton channel. F(1) has five subunits: alpha(3), beta(3), gamma(1), delta(1), epsilon(1). F(0) has three main subunits: a(1), b(2) and c(10-14). The alpha and beta chains form an alternating ring which encloses part of the gamma chain. F(1) is attached to F(0) by a central stalk formed by the gamma and epsilon chains, while a peripheral stalk is formed by the delta and b chains.

It is found in the cell inner membrane. Its function is as follows. F(1)F(0) ATP synthase produces ATP from ADP in the presence of a proton or sodium gradient. F-type ATPases consist of two structural domains, F(1) containing the extramembraneous catalytic core and F(0) containing the membrane proton channel, linked together by a central stalk and a peripheral stalk. During catalysis, ATP synthesis in the catalytic domain of F(1) is coupled via a rotary mechanism of the central stalk subunits to proton translocation. Component of the F(0) channel, it forms part of the peripheral stalk, linking F(1) to F(0). The polypeptide is ATP synthase subunit b (Salinibacter ruber (strain DSM 13855 / M31)).